Consider the following 220-residue polypeptide: Glutathione S-transferase (220 aa).

The 77-residue stretch at 1–77 (MLKLHGFSVS…YIEQTQSGKA (77 aa)) folds into the GST N-terminal domain. Residues Tyr-12, Val-49, and 61 to 62 (ET) each bind glutathione. A GST C-terminal domain is found at 82-211 (DPFEQAKVRE…ADKEASMPAF (130 aa)).

It belongs to the GST superfamily. As to quaternary structure, monomer and homodimer.

The protein localises to the cytoplasm. The catalysed reaction is RX + glutathione = an S-substituted glutathione + a halide anion + H(+). Functionally, conjugation of reduced glutathione to a wide number of exogenous and endogenous hydrophobic electrophiles. The sequence is that of Glutathione S-transferase from Pseudomonas putida (strain ATCC 700007 / DSM 6899 / JCM 31910 / BCRC 17059 / LMG 24140 / F1).